Here is a 470-residue protein sequence, read N- to C-terminus: Cysteine--tRNA ligase (470 aa).

Cys-30 is a Zn(2+) binding site. A 'HIGH' region motif is present at residues 32–42; the sequence is PTVYNYIHIGN. Zn(2+)-binding residues include Cys-211, His-236, and Glu-240. Residues 268–272 carry the 'KMSKS' region motif; sequence KMSKS. Residue Lys-271 coordinates ATP.

Belongs to the class-I aminoacyl-tRNA synthetase family. In terms of assembly, monomer. Zn(2+) is required as a cofactor.

The protein resides in the cytoplasm. The catalysed reaction is tRNA(Cys) + L-cysteine + ATP = L-cysteinyl-tRNA(Cys) + AMP + diphosphate. The protein is Cysteine--tRNA ligase of Fervidobacterium nodosum (strain ATCC 35602 / DSM 5306 / Rt17-B1).